The chain runs to 359 residues: Tyrosine-protein phosphatase non-receptor type 7 (359 aa).

Residues 1–34 (MVQACEGRSRAQLPTLSLGADMTQPPPAKAPAKK) form a disordered region. Positions 38–51 (LQERRGSSVALMLD) are interaction with MAP kinases. The residue at position 44 (Ser-44) is a Phosphoserine. Residue Thr-66 is modified to Phosphothreonine. Residues Ser-93 and Ser-143 each carry the phosphoserine modification. Residues 97–349 (LEEEFLKIPS…QFLHHTLALY (253 aa)) form the Tyrosine-protein phosphatase domain. Substrate-binding positions include Asp-257, 290 to 296 (CSAGIGR), and Gln-334. The active-site Phosphocysteine intermediate is Cys-290. Cys-290 carries the cysteine sulfenic acid (-SOH) modification.

It belongs to the protein-tyrosine phosphatase family. Non-receptor class subfamily. In terms of processing, oxidized at active site cysteine. Treatment with pervanadate (vanadate and H(2)O(2)) or with antigen enhanced oxidation of active site cysteine.

The protein localises to the cytoplasm. It is found in the cytoskeleton. It carries out the reaction O-phospho-L-tyrosyl-[protein] + H2O = L-tyrosyl-[protein] + phosphate. Inhibited in cells after FCER1A triggering. In terms of biological role, may play a role in the regulation of T and B-lymphocyte development and signal transduction. The sequence is that of Tyrosine-protein phosphatase non-receptor type 7 (Ptpn7) from Rattus norvegicus (Rat).